Here is a 246-residue protein sequence, read N- to C-terminus: MRKIALILAMLLIPCVSFAGLLGSSSSTTPVSKEYKQQLMGSPVYIQIFKEERTLDLYVKMGEQYQLLDSYKICKYSGGLGPKQRQGDFKSPEGFYSVQRNQLKPDSRYYKAINIGFPNAYDRAHGYEGKYLMIHGDCVSIGCYAMTNQGIDEIFQFVTGALVFGQPSVQVSIYPFRMTDANMKRHKYSNFKDFWEQLKPGYDYFEQTRKPPTVSVVNGRYVVSKPLSHEVVQPQLASNYTLPEAK.

An N-terminal signal peptide occupies residues 1–19 (MRKIALILAMLLIPCVSFA). One can recognise a L,D-TPase catalytic domain in the interval 44 to 174 (VYIQIFKEER…GQPSVQVSIY (131 aa)). Histidine 135 serves as the catalytic Proton donor/acceptor. Cysteine 143 serves as the catalytic Nucleophile.

This sequence belongs to the YkuD family.

Its pathway is cell wall biogenesis; peptidoglycan biosynthesis. The polypeptide is Putative L,D-transpeptidase YafK (yafK) (Escherichia coli O157:H7).